We begin with the raw amino-acid sequence, 841 residues long: Probable alpha-glucuronidase A (841 aa).

Positions 1 to 19 (MLRLPLVLVWSLWASLTVA) are cleaved as a signal peptide. Residues Asn-50, Asn-104, Asn-223, Asn-280, Asn-311, Asn-344, Asn-466, Asn-528, Asn-577, Asn-683, Asn-724, and Asn-733 are each glycosylated (N-linked (GlcNAc...) asparagine).

It belongs to the glycosyl hydrolase 67 family.

The protein localises to the secreted. It carries out the reaction an alpha-D-glucuronoside + H2O = D-glucuronate + an alcohol. In terms of biological role, alpha-glucuronidase involved in the hydrolysis of xylan, a major structural heterogeneous polysaccharide found in plant biomass representing the second most abundant polysaccharide in the biosphere, after cellulose. Releases 4-O-methylglucuronic acid from xylan. This is Probable alpha-glucuronidase A (aguA) from Aspergillus terreus (strain NIH 2624 / FGSC A1156).